The primary structure comprises 197 residues: DNA-directed RNA polymerases I, II, and III subunit rpabc1 (197 aa).

It belongs to the archaeal Rpo5/eukaryotic RPB5 RNA polymerase subunit family. As to quaternary structure, component of the RNA polymerase I (Pol I), RNA polymerase II (Pol II) and RNA polymerase III (Pol III) complexes consisting of at least 13, 12 and 17 subunits, respectively. In RNA Pol II, this subunit is present in 2-fold molar excess over the other subunits.

The protein localises to the nucleus. In terms of biological role, DNA-dependent RNA polymerase catalyzes the transcription of DNA into RNA using the four ribonucleoside triphosphates as substrates. Common component of RNA polymerases I, II and III which synthesize ribosomal RNA precursors, mRNA precursors and many functional non-coding RNAs, and small RNAs, such as 5S rRNA and tRNAs, respectively. Pol II is the central component of the basal RNA polymerase II transcription machinery. Pols are composed of mobile elements that move relative to each other. In Pol II, RPB5 is part of the lower jaw surrounding the central large cleft and thought to grab the incoming DNA template. Seems to be the major component in this process. The sequence is that of DNA-directed RNA polymerases I, II, and III subunit rpabc1 (polr2e) from Dictyostelium discoideum (Social amoeba).